The primary structure comprises 429 residues: UDP-N-acetylglucosamine 1-carboxyvinyltransferase (429 aa).

Phosphoenolpyruvate is bound at residue 22 to 23 (KN). Position 102 (Arg-102) interacts with UDP-N-acetyl-alpha-D-glucosamine. Cys-126 acts as the Proton donor in catalysis. Cys-126 bears the 2-(S-cysteinyl)pyruvic acid O-phosphothioketal mark. UDP-N-acetyl-alpha-D-glucosamine contacts are provided by residues 131–135 (RPVDL), Asp-316, and Ile-338.

The protein belongs to the EPSP synthase family. MurA subfamily.

It localises to the cytoplasm. It carries out the reaction phosphoenolpyruvate + UDP-N-acetyl-alpha-D-glucosamine = UDP-N-acetyl-3-O-(1-carboxyvinyl)-alpha-D-glucosamine + phosphate. It functions in the pathway cell wall biogenesis; peptidoglycan biosynthesis. Cell wall formation. Adds enolpyruvyl to UDP-N-acetylglucosamine. This is UDP-N-acetylglucosamine 1-carboxyvinyltransferase from Nitrobacter hamburgensis (strain DSM 10229 / NCIMB 13809 / X14).